A 542-amino-acid polypeptide reads, in one-letter code: CTP synthase (542 aa).

Residues 1–265 (MTRYIFVTGG…DDFVVERFGL (265 aa)) form an amidoligase domain region. S13 is a binding site for CTP. UTP is bound at residue S13. Residues 14–19 (SLGKGI) and D71 contribute to the ATP site. The Mg(2+) site is built by D71 and E139. CTP-binding positions include 146 to 148 (DIE), 186 to 191 (KTKPTQ), and K222. Residues 186 to 191 (KTKPTQ) and K222 each bind UTP. The region spanning 290 to 541 (TIAMVGKYME…VKAALAQKNK (252 aa)) is the Glutamine amidotransferase type-1 domain. G351 is an L-glutamine binding site. C378 functions as the Nucleophile; for glutamine hydrolysis in the catalytic mechanism. L-glutamine-binding positions include 379-382 (LGMQ), E402, and R469. Catalysis depends on residues H514 and E516.

It belongs to the CTP synthase family. As to quaternary structure, homotetramer.

The enzyme catalyses UTP + L-glutamine + ATP + H2O = CTP + L-glutamate + ADP + phosphate + 2 H(+). It carries out the reaction L-glutamine + H2O = L-glutamate + NH4(+). The catalysed reaction is UTP + NH4(+) + ATP = CTP + ADP + phosphate + 2 H(+). It participates in pyrimidine metabolism; CTP biosynthesis via de novo pathway; CTP from UDP: step 2/2. Allosterically activated by GTP, when glutamine is the substrate; GTP has no effect on the reaction when ammonia is the substrate. The allosteric effector GTP functions by stabilizing the protein conformation that binds the tetrahedral intermediate(s) formed during glutamine hydrolysis. Inhibited by the product CTP, via allosteric rather than competitive inhibition. Its function is as follows. Catalyzes the ATP-dependent amination of UTP to CTP with either L-glutamine or ammonia as the source of nitrogen. Regulates intracellular CTP levels through interactions with the four ribonucleotide triphosphates. The sequence is that of CTP synthase from Pseudomonas putida (strain W619).